A 449-amino-acid chain; its full sequence is Sensor protein QseC (449 aa).

Residues 1-12 are Cytoplasmic-facing; it reads MKFTQRLSLRVR. A helical transmembrane segment spans residues 13–33; the sequence is LTLIFLILASVTWLLSSFVAW. Topologically, residues 34–156 are periplasmic; sequence KQTTDNVDEL…QEWEYREDMA (123 aa). Residues 157–177 traverse the membrane as a helical segment; that stretch reads LAIVAGQLIPWLVALPVMLII. At 178–449 the chain is on the cytoplasmic side; sequence MMVLLGRELA…QGGFEAKVSW (272 aa). Residues 243 to 449 enclose the Histidine kinase domain; the sequence is DAAHELRSPL…QGGFEAKVSW (207 aa). Position 246 is a phosphohistidine; by autocatalysis (H246).

It localises to the cell inner membrane. The enzyme catalyses ATP + protein L-histidine = ADP + protein N-phospho-L-histidine.. Member of a two-component regulatory system QseB/QseC. Activates the flagella regulon by activating transcription of FlhDC. May activate QseB by phosphorylation. The protein is Sensor protein QseC (qseC) of Escherichia coli O157:H7.